The chain runs to 147 residues: Peptidyl-lysine N-acetyltransferase YjaB (147 aa).

The 142-residue stretch at 3 to 144 folds into the N-acetyltransferase domain; it reads ISIRRSRHEE…KPYPLLNLAY (142 aa).

Belongs to the acetyltransferase family.

The catalysed reaction is L-lysyl-[protein] + acetyl-CoA = N(6)-acetyl-L-lysyl-[protein] + CoA + H(+). Functionally, N-epsilon-lysine acetyltransferase that catalyzes acetylation of a large number of proteins. Binds acetyl-CoA. The protein is Peptidyl-lysine N-acetyltransferase YjaB (yjaB) of Escherichia coli (strain K12).